A 231-amino-acid chain; its full sequence is MAVTFSDLSSPAGLDSLDAYLLSRSYITGYQASKDDLTVFSAVPKASLASYVNVSRWYKHIDALLRISGVSGEGSGVTVEGNAPASDVATPPAADSKASAADDDDDDDVDLFGEETEEEKKAAEERAAAAAAKPAKKKESGKSSVLLDVKPWDDETDMKKLEEAVRSVQQEGLTLGASKLVPVGYGIKKLTIMMTIVDDLVSVDNLIEDYLTVEPINEYVQSCDIVAFNKI.

Residues 75–136 (SGVTVEGNAP…AAAAAAKPAK (62 aa)) are disordered. Residues 101-117 (ADDDDDDDVDLFGEETE) show a composition bias toward acidic residues. Residues 118 to 127 (EEKKAAEERA) show a composition bias toward basic and acidic residues.

It belongs to the EF-1-beta/EF-1-delta family. As to quaternary structure, EF-1 is composed of 4 subunits: alpha, beta (1B-alpha=beta'), delta (1B-beta), and gamma (1B-gamma).

Its function is as follows. EF-1-beta and EF-1-beta' stimulate the exchange of GDP bound to EF-1-alpha to GTP. The protein is Elongation factor 1-delta of Beta vulgaris (Sugar beet).